Reading from the N-terminus, the 150-residue chain is Small ribosomal subunit protein uS11y (150 aa).

S19 carries the phosphoserine modification.

It belongs to the universal ribosomal protein uS11 family.

It localises to the cytoplasm. In Arabidopsis thaliana (Mouse-ear cress), this protein is Small ribosomal subunit protein uS11y (RPS14B).